A 129-amino-acid chain; its full sequence is Small ribosomal subunit protein uS11 (129 aa).

The protein belongs to the universal ribosomal protein uS11 family. Part of the 30S ribosomal subunit. Interacts with proteins S7 and S18. Binds to IF-3.

Its function is as follows. Located on the platform of the 30S subunit, it bridges several disparate RNA helices of the 16S rRNA. Forms part of the Shine-Dalgarno cleft in the 70S ribosome. This chain is Small ribosomal subunit protein uS11, found in Mannheimia succiniciproducens (strain KCTC 0769BP / MBEL55E).